The sequence spans 426 residues: D-cysteine desulfhydrase 1, mitochondrial (426 aa).

A mitochondrion-targeting transit peptide spans 1–63 (MARGAHQAPG…IGSFLSKRPY (63 aa)). An N6-(pyridoxal phosphate)lysine modification is found at K119. S146 serves as the catalytic Nucleophile.

It belongs to the ACC deaminase/D-cysteine desulfhydrase family. As to quaternary structure, homodimer. Requires pyridoxal 5'-phosphate as cofactor. As to expression, present in seeds (at protein level).

The protein localises to the mitochondrion. The enzyme catalyses D-cysteine + H2O = hydrogen sulfide + pyruvate + NH4(+) + H(+). Inhibited by L-cysteine (L-cys). In terms of biological role, catalyzes the production of hydrogen sulfide (H2S) from D-cysteine (D-cys). The chain is D-cysteine desulfhydrase 1, mitochondrial from Oryza sativa subsp. japonica (Rice).